The following is a 301-amino-acid chain: Cutinase (301 aa).

An N-terminal signal peptide occupies residues 1-40 (MAVMTPRRERSSLLSRALQVTAAAATALVTAVSLAAPAHA). Tyrosine 100 is a poly(ethylene terephthalate) binding site. Residue serine 170 is the Nucleophile of the active site. Positions 171 and 195 each coordinate poly(ethylene terephthalate). Catalysis depends on charge relay system residues aspartate 216 and histidine 248. A disulfide bond links cysteine 281 and cysteine 299.

The protein belongs to the AB hydrolase superfamily.

It localises to the secreted. Its subcellular location is the periplasm. It carries out the reaction a butanoate ester + H2O = an aliphatic alcohol + butanoate + H(+). The catalysed reaction is (ethylene terephthalate)(n) + H2O = (ethylene terephthalate)(n-1) + 4-[(2-hydroxyethoxy)carbonyl]benzoate + H(+). The enzyme catalyses cutin + H2O = cutin monomers.. Activated by magnesium ions. Activated by calcium ions. Inhibited by the serine hydrolase inhibitor phenylmethanesulfonyl fluoride (PMSF). Functionally, catalyzes the hydrolysis of cutin, a polyester that forms the structure of plant cuticle. Shows esterase activity towards p-nitrophenol-linked aliphatic esters (pNP-aliphatic esters). Also hydrolyzes the triglyceride triolein. Capable of degrading the plastic poly(ethylene terephthalate) (PET), the most abundant polyester plastic in the world. This Thermobifida fusca (strain YX) protein is Cutinase.